The chain runs to 289 residues: NAD kinase (289 aa).

D63 serves as the catalytic Proton acceptor. NAD(+) is bound by residues 63–64 (DG), R68, 138–139 (ND), R149, D168, 179–184 (TGYSLS), and Q238.

Belongs to the NAD kinase family. Requires a divalent metal cation as cofactor.

It is found in the cytoplasm. It catalyses the reaction NAD(+) + ATP = ADP + NADP(+) + H(+). Its function is as follows. Involved in the regulation of the intracellular balance of NAD and NADP, and is a key enzyme in the biosynthesis of NADP. Catalyzes specifically the phosphorylation on 2'-hydroxyl of the adenosine moiety of NAD to yield NADP. The protein is NAD kinase of Gemmatimonas aurantiaca (strain DSM 14586 / JCM 11422 / NBRC 100505 / T-27).